The following is a 261-amino-acid chain: Tryptophan synthase alpha chain (261 aa).

Active-site proton acceptor residues include Glu-49 and Asp-60.

Belongs to the TrpA family. Tetramer of two alpha and two beta chains.

It catalyses the reaction (1S,2R)-1-C-(indol-3-yl)glycerol 3-phosphate + L-serine = D-glyceraldehyde 3-phosphate + L-tryptophan + H2O. The protein operates within amino-acid biosynthesis; L-tryptophan biosynthesis; L-tryptophan from chorismate: step 5/5. In terms of biological role, the alpha subunit is responsible for the aldol cleavage of indoleglycerol phosphate to indole and glyceraldehyde 3-phosphate. The chain is Tryptophan synthase alpha chain from Roseiflexus castenholzii (strain DSM 13941 / HLO8).